Here is a 768-residue protein sequence, read N- to C-terminus: Probable beta-glucosidase M (768 aa).

The N-terminal stretch at 1 to 19 (MHAIAGLTGLLAGVSLSYA) is a signal peptide. Residues asparagine 25, asparagine 72, and asparagine 259 are each glycosylated (N-linked (GlcNAc...) asparagine). The active site involves aspartate 287. N-linked (GlcNAc...) asparagine glycans are attached at residues asparagine 315, asparagine 322, asparagine 394, asparagine 434, asparagine 472, asparagine 543, and asparagine 651.

This sequence belongs to the glycosyl hydrolase 3 family.

It is found in the secreted. The catalysed reaction is Hydrolysis of terminal, non-reducing beta-D-glucosyl residues with release of beta-D-glucose.. Its pathway is glycan metabolism; cellulose degradation. Its function is as follows. Beta-glucosidases are one of a number of cellulolytic enzymes involved in the degradation of cellulosic biomass. Catalyzes the last step releasing glucose from the inhibitory cellobiose. The polypeptide is Probable beta-glucosidase M (bglM) (Aspergillus oryzae (strain ATCC 42149 / RIB 40) (Yellow koji mold)).